A 396-amino-acid chain; its full sequence is Digeranylgeranylglycerophospholipid reductase 2 (396 aa).

10 residues coordinate FAD: Ala13, Glu32, Cys43, Ala44, Gly46, Arg92, Ala116, Asp278, Gly290, and Leu291.

Belongs to the geranylgeranyl reductase family. DGGGPL reductase subfamily. FAD is required as a cofactor.

The catalysed reaction is a 2,3-bis-O-phytanyl-sn-glycerol 1-phospholipid + 8 A = a 2,3-bis-O-(geranylgeranyl)-sn-glycerol 1-phospholipid + 8 AH2. It carries out the reaction 2,3-bis-O-(phytanyl)-sn-glycerol 1-phosphate + 8 A = 2,3-bis-O-(geranylgeranyl)-sn-glycerol 1-phosphate + 8 AH2. It catalyses the reaction CDP-2,3-bis-O-(geranylgeranyl)-sn-glycerol + 8 AH2 = CDP-2,3-bis-O-(phytanyl)-sn-glycerol + 8 A. The enzyme catalyses archaetidylserine + 8 AH2 = 2,3-bis-O-phytanyl-sn-glycero-3-phospho-L-serine + 8 A. It participates in membrane lipid metabolism; glycerophospholipid metabolism. Its function is as follows. Is involved in the reduction of 2,3-digeranylgeranylglycerophospholipids (unsaturated archaeols) into 2,3-diphytanylglycerophospholipids (saturated archaeols) in the biosynthesis of archaeal membrane lipids. Catalyzes the formation of archaetidic acid (2,3-di-O-phytanyl-sn-glyceryl phosphate) from 2,3-di-O-geranylgeranylglyceryl phosphate (DGGGP) via the hydrogenation of each double bond of the isoprenoid chains. Is also probably able to reduce double bonds of geranyl groups in CDP-2,3-bis-O-(geranylgeranyl)-sn-glycerol and archaetidylserine, thus acting at various stages in the biosynthesis of archaeal membrane lipids. The chain is Digeranylgeranylglycerophospholipid reductase 2 from Methanopyrus kandleri (strain AV19 / DSM 6324 / JCM 9639 / NBRC 100938).